Consider the following 239-residue polypeptide: Uridylate kinase (239 aa).

Residue 10 to 13 (KLSG) coordinates ATP. Positions 18-23 (GEDGYG) are involved in allosteric activation by GTP. Glycine 52 serves as a coordination point for UMP. Residues glycine 53 and arginine 57 each contribute to the ATP site. UMP is bound by residues aspartate 72 and 133–140 (TGNPYFTT). Residues threonine 160, tyrosine 166, and aspartate 169 each contribute to the ATP site.

The protein belongs to the UMP kinase family. In terms of assembly, homohexamer.

The protein localises to the cytoplasm. The enzyme catalyses UMP + ATP = UDP + ADP. It participates in pyrimidine metabolism; CTP biosynthesis via de novo pathway; UDP from UMP (UMPK route): step 1/1. Allosterically activated by GTP. Inhibited by UTP. Functionally, catalyzes the reversible phosphorylation of UMP to UDP. The sequence is that of Uridylate kinase from Chlorobium chlorochromatii (strain CaD3).